The following is a 317-amino-acid chain: Putative 2-hydroxyacid dehydrogenase SAR2389 (317 aa).

Residues 155–156 (EI), 234–236 (ASR), and D260 each bind NAD(+). Residue R236 is part of the active site. E265 is a catalytic residue. The active-site Proton donor is H283. 283-286 (HIGN) contacts NAD(+).

The protein belongs to the D-isomer specific 2-hydroxyacid dehydrogenase family.

This is Putative 2-hydroxyacid dehydrogenase SAR2389 from Staphylococcus aureus (strain MRSA252).